We begin with the raw amino-acid sequence, 357 residues long: Sulfate/thiosulfate import ATP-binding protein CysA (357 aa).

Residues Ile3–Leu237 form the ABC transporter domain. Gly35–Thr42 contacts ATP.

This sequence belongs to the ABC transporter superfamily. Sulfate/tungstate importer (TC 3.A.1.6) family. The complex is composed of two ATP-binding proteins (CysA), two transmembrane proteins (CysT and CysW) and a solute-binding protein (CysP).

The protein localises to the cell inner membrane. The catalysed reaction is sulfate(out) + ATP + H2O = sulfate(in) + ADP + phosphate + H(+). It catalyses the reaction thiosulfate(out) + ATP + H2O = thiosulfate(in) + ADP + phosphate + H(+). Part of the ABC transporter complex CysAWTP involved in sulfate/thiosulfate import. Responsible for energy coupling to the transport system. The sequence is that of Sulfate/thiosulfate import ATP-binding protein CysA from Neisseria meningitidis serogroup A / serotype 4A (strain DSM 15465 / Z2491).